The primary structure comprises 547 residues: Putative cysteine ligase BshC (547 aa).

Positions 462-484 form a coiled coil; sequence NLAEENLDRVIAQARFLRQKVEH.

Belongs to the BshC family.

Involved in bacillithiol (BSH) biosynthesis. May catalyze the last step of the pathway, the addition of cysteine to glucosamine malate (GlcN-Mal) to generate BSH. The polypeptide is Putative cysteine ligase BshC (Heliobacterium modesticaldum (strain ATCC 51547 / Ice1)).